Reading from the N-terminus, the 1377-residue chain is Zinc finger MYM-type protein 2 (1377 aa).

Glycyl lysine isopeptide (Lys-Gly) (interchain with G-Cter in SUMO2) cross-links involve residues K48, K88, K98, and K104. 2 stretches are compositionally biased toward polar residues: residues 85–115 (TSSKNEELQGNDSKITPSSKELASQKGSVSE) and 127–138 (TNQGQEKNSSNF). The interval 85–177 (TSSKNEELQG…GMGNSGITTE (93 aa)) is disordered. The segment covering 139–152 (IERRPPETKNRTND) has biased composition (basic and acidic residues). Residue K147 forms a Glycyl lysine isopeptide (Lys-Gly) (interchain with G-Cter in SUMO2) linkage. The span at 153–164 (VDFSTSSFSRSK) shows a compositional bias: polar residues. Phosphoserine is present on S159. Residues K253 and K297 each participate in a glycyl lysine isopeptide (Lys-Gly) (interchain with G-Cter in SUMO2) cross-link. The interval 273-305 (NGESATHHNPDSWISQSASFPRNQKQPGVDSLS) is disordered. The span at 284–298 (SWISQSASFPRNQKQ) shows a compositional bias: polar residues. At S305 the chain carries Phosphoserine. Glycyl lysine isopeptide (Lys-Gly) (interchain with G-Cter in SUMO2) cross-links involve residues K312, K325, K348, and K366. The segment at 327-363 (VKVTCANCKKPLQKGQTAYQRKGSAHLFCSTTCLSSF) adopts an MYM-type 1 zinc-finger fold. The segment at 369 to 409 (PKKLCVMCKKDITTMKGTIVAQVDSSESFQEFCSTSCLSLY) adopts an MYM-type 2 zinc-finger fold. Residues K417, K441, K491, K503, K513, K529, and K532 each participate in a glycyl lysine isopeptide (Lys-Gly) (interchain with G-Cter in SUMO2) cross-link. MYM-type zinc fingers lie at residues 421-456 (NKSRCTICGKLTEIRHEVSFKNMTHKLCSDHCFNRY) and 463-502 (IMNCCEQCGEYLPSKGAGNNVLVIDGQQKRFCCQSCVSEY). The MYM-type 5 zinc finger occupies 533–570 (LTTCTGCRTQCRFFDMTQCIGPNGYMEPYCSTACMNSH). Glycyl lysine isopeptide (Lys-Gly) (interchain with G-Cter in SUMO2) cross-links involve residues K576, K603, K649, K658, K688, K700, and K709. An MYM-type 6 zinc finger spans residues 636 to 671 (QLKCNYCKNSFCSKPEILEWENKVHQFCSKTCSDDY). 2 MYM-type zinc fingers span residues 723–758 (RCVTCNYCSQLCKKGATKELDGVVRDFCSEDCCKKF) and 764–799 (KAARCDCCKSQGTLKERVQWRGEMKHFCDQHCLLRF). Glycyl lysine isopeptide (Lys-Gly) (interchain with G-Cter in SUMO2) cross-links involve residues K764, K788, K812, and K829. Residues S838 and S958 each carry the phosphoserine modification. Disordered stretches follow at residues 983–1002 (LLKNSDPETQSSMPDVPYEP) and 1028–1064 (VFGEEYEEQPRPRSKKKGAKRKAVSGYQSHDDSSDNS). The segment covering 1039 to 1050 (PRSKKKGAKRKA) has biased composition (basic residues). A Phosphoserine modification is found at S1064. Phosphothreonine is present on T1376.

In terms of assembly, may be a component of a BHC histone deacetylase complex that contains HDAC1, HDAC2, HMG20B/BRAF35, KDM1A, RCOR1/CoREST, PHF21A/BHC80, ZNF198, ZNF217, ZMYM3, GSE1 and GTF2I.

It is found in the nucleus. Functionally, may function as a transcription factor. The sequence is that of Zinc finger MYM-type protein 2 (ZMYM2) from Pongo abelii (Sumatran orangutan).